We begin with the raw amino-acid sequence, 424 residues long: Enolase (424 aa).

Q162 lines the (2R)-2-phosphoglycerate pocket. E204 acts as the Proton donor in catalysis. The Mg(2+) site is built by D241, E284, and D311. (2R)-2-phosphoglycerate contacts are provided by K336, R365, S366, and K387. The active-site Proton acceptor is the K336.

It belongs to the enolase family. Mg(2+) is required as a cofactor.

Its subcellular location is the cytoplasm. It is found in the secreted. The protein localises to the cell surface. It carries out the reaction (2R)-2-phosphoglycerate = phosphoenolpyruvate + H2O. Its pathway is carbohydrate degradation; glycolysis; pyruvate from D-glyceraldehyde 3-phosphate: step 4/5. Functionally, catalyzes the reversible conversion of 2-phosphoglycerate (2-PG) into phosphoenolpyruvate (PEP). It is essential for the degradation of carbohydrates via glycolysis. In Rhizobium leguminosarum bv. trifolii (strain WSM2304), this protein is Enolase.